Here is a 366-residue protein sequence, read N- to C-terminus: Cytochrome c peroxidase, mitochondrial (366 aa).

His-123 (proton acceptor) is an active-site residue. A compositionally biased stretch (basic and acidic residues) spans 195-206; it reads IEWRPGRVDDNT. Residues 195–218 are disordered; sequence IEWRPGRVDDNTASKVPPNGRLPD. His-247 provides a ligand contact to heme b. Trp-263 serves as the catalytic Tryptophan radical intermediate.

This sequence belongs to the peroxidase family. Cytochrome c peroxidase subfamily. As to quaternary structure, forms a one-to-one complex with cytochrome c. Heme b serves as cofactor.

The protein localises to the mitochondrion matrix. It localises to the mitochondrion intermembrane space. It catalyses the reaction 2 Fe(II)-[cytochrome c] + H2O2 + 2 H(+) = 2 Fe(III)-[cytochrome c] + 2 H2O. Destroys radicals which are normally produced within the cells and which are toxic to biological systems. This Candida albicans (strain SC5314 / ATCC MYA-2876) (Yeast) protein is Cytochrome c peroxidase, mitochondrial (CCP1).